A 620-amino-acid chain; its full sequence is UvrABC system protein C (620 aa).

The region spanning 13–92 is the GIY-YIG domain; that stretch reads DKPGVYIMKN…IKKYSPRYNI (80 aa). The UVR domain maps to 204–239; sequence TSIIKKLKLEMEKAAEELEFEKAAKIRDRILAIELI.

Belongs to the UvrC family. As to quaternary structure, interacts with UvrB in an incision complex.

The protein localises to the cytoplasm. The UvrABC repair system catalyzes the recognition and processing of DNA lesions. UvrC both incises the 5' and 3' sides of the lesion. The N-terminal half is responsible for the 3' incision and the C-terminal half is responsible for the 5' incision. In Clostridium perfringens (strain 13 / Type A), this protein is UvrABC system protein C.